The primary structure comprises 433 residues: Casein kinase 1-like protein 5 (433 aa).

Residues 9–278 (FRLGRKIGSG…LKRLFRNLFI (270 aa)) form the Protein kinase domain. ATP contacts are provided by residues 15 to 23 (IGSGSFGEI) and Lys-38. Catalysis depends on Asp-128, which acts as the Proton acceptor. The tract at residues 297 to 433 (QSQSGNPQPR…DDVEPQSKAL (137 aa)) is disordered. Positions 342 to 359 (LKQKDKNGNDSAIAKDKL) are enriched in basic and acidic residues. Low complexity predominate over residues 362–375 (GSLNLGRSEGSSSR). Phosphoserine is present on Ser-390. The segment covering 407–423 (INNNAGDETAATPQSNG) has biased composition (polar residues).

This sequence belongs to the protein kinase superfamily. CK1 Ser/Thr protein kinase family. Casein kinase I subfamily. As to quaternary structure, monomer. Autophosphorylated.

The protein localises to the cytoplasm. It carries out the reaction L-seryl-[protein] + ATP = O-phospho-L-seryl-[protein] + ADP + H(+). The enzyme catalyses L-threonyl-[protein] + ATP = O-phospho-L-threonyl-[protein] + ADP + H(+). In terms of biological role, casein kinases are operationally defined by their preferential utilization of acidic proteins such as caseins as substrates. It can phosphorylate a large number of proteins. The protein is Casein kinase 1-like protein 5 of Arabidopsis thaliana (Mouse-ear cress).